Consider the following 216-residue polypeptide: 3-keto-L-gulonate-6-phosphate decarboxylase UlaD (216 aa).

D11 contributes to the substrate binding site. Mg(2+) is bound by residues E33 and D62. R192 provides a ligand contact to substrate.

This sequence belongs to the HPS/KGPDC family. KGPDC subfamily. In terms of assembly, homodimer. Mg(2+) serves as cofactor.

The enzyme catalyses 3-dehydro-L-gulonate 6-phosphate + H(+) = L-xylulose 5-phosphate + CO2. It participates in cofactor degradation; L-ascorbate degradation; D-xylulose 5-phosphate from L-ascorbate: step 2/4. Catalyzes the decarboxylation of 3-keto-L-gulonate-6-P into L-xylulose-5-P. Is involved in the anaerobic L-ascorbate utilization. This Shigella dysenteriae serotype 1 (strain Sd197) protein is 3-keto-L-gulonate-6-phosphate decarboxylase UlaD.